Consider the following 211-residue polypeptide: MTPWLGLVVLLGSWSLGDWGAEACTCSPSHPQDAFCNSDIVIRAKVVGKKLLKEGPFGTMVYTIKQMKMYRGFTKMPHVQYIHTEASESLCGLKLEVNKYQYLLTGRVYDGKMYTGLCNFVERWDQLTLSQRKGLNYRYHLGCNCKIKSCYYLPCFVTSKNECLWTDMFSNFGYPGYQSKHYACIRQKGGYCSWYRGWAPPDKSIINATDP.

The first 23 residues, 1-23, serve as a signal peptide directing secretion; it reads MTPWLGLVVLLGSWSLGDWGAEA. Residue C24 coordinates Zn(2+). Involved in metalloproteinase-binding stretches follow at residues 24–27 and 88–89; these read CTCS and ES. Cystine bridges form between C24/C91, C26/C118, C36/C143, C145/C192, C150/C155, and C163/C184. Positions 24–143 constitute an NTR domain; it reads CTCSPSHPQD…GLNYRYHLGC (120 aa). The tract at residues 105–188 is mediates interaction with EFEMP1; the sequence is TGRVYDGKMY…SKHYACIRQK (84 aa). N207 is a glycosylation site (N-linked (GlcNAc...) asparagine).

Belongs to the protease inhibitor I35 (TIMP) family. As to quaternary structure, interacts with EFEMP1. Interacts with KDR.

Its subcellular location is the secreted. It localises to the extracellular space. The protein localises to the extracellular matrix. In terms of biological role, mediates a variety of processes including matrix regulation and turnover, inflammation, and angiogenesis, through reversible inhibition of zinc protease superfamily enzymes, primarily matrix metalloproteinases (MMPs). Regulates extracellular matrix (ECM) remodeling through inhibition of matrix metalloproteinases (MMP) including MMP-1, MMP-2, MMP-3, MMP-7, MMP-9, MMP-13, MMP-14 and MMP-15. Additionally, modulates the processing of amyloid precursor protein (APP) and apolipoprotein E receptor ApoER2 by inhibiting two alpha-secretases ADAM10 and ADAM17. Functions as a tumor suppressor and a potent inhibitor of angiogenesis. Exerts its anti-angiogenic effect by directly interacting with vascular endothelial growth factor (VEGF) receptor-2/KDR, preventing its binding to the VEGFA ligand. Selectively induces apoptosis in angiogenic endothelial cells through a caspase-independent cell death pathway. Mechanistically, inhibits matrix-induced focal adhesion kinase PTK2 tyrosine phosphorylation and association with paxillin/PXN and disrupts the incorporation of ITGB3, PTK2 and PXN into focal adhesion contacts on the matrix. The sequence is that of Metalloproteinase inhibitor 3 (TIMP3) from Bos taurus (Bovine).